The chain runs to 205 residues: MARGPRYKVPFRRRREGLTNYRKRRRLILSRKPRLVVRKTNKHIIAQVVVAKPQGDVTIVGVDTRALAKFGWRGDENNTSAAYLLGLVAGYKARLRGVREAVLDIGLHRPVAGSRVFAVLKGALDAGLEIPHGEEVLPEDDRVSGKHVAEYAAKLKEENPELYKARFSRYLQRGVQPEDLPKHFEEVKKKIVEHYEAKLAKAVAQ.

The protein belongs to the universal ribosomal protein uL18 family. As to quaternary structure, part of the 50S ribosomal subunit. Contacts the 5S and 23S rRNAs.

Functionally, this is one of the proteins that bind and probably mediate the attachment of the 5S RNA into the large ribosomal subunit, where it forms part of the central protuberance. The sequence is that of Large ribosomal subunit protein uL18 from Pyrobaculum neutrophilum (strain DSM 2338 / JCM 9278 / NBRC 100436 / V24Sta) (Thermoproteus neutrophilus).